Here is a 127-residue protein sequence, read N- to C-terminus: Large ribosomal subunit protein bL17 (127 aa).

This sequence belongs to the bacterial ribosomal protein bL17 family. In terms of assembly, part of the 50S ribosomal subunit. Contacts protein L32.

This chain is Large ribosomal subunit protein bL17, found in Alcanivorax borkumensis (strain ATCC 700651 / DSM 11573 / NCIMB 13689 / SK2).